Here is a 280-residue protein sequence, read N- to C-terminus: Rhomboid-like protein 11, chloroplastic (280 aa).

Residues 1–57 (MSQLLHLHRLSLPQSSLRFRFPPLHRRRAASSPTNSTQPPLQFRPLTVSRSQITCRF) constitute a chloroplast transit peptide. Residues 58–82 (SQSDITPQFELDKAKDNRKPQKRAN) lie on the Stromal side of the membrane. The helical transmembrane segment at 83–103 (GIFWIILINLGIYLADHFFQV) threads the bilayer. Topologically, residues 104–117 (RGIKSLYLYHNFPA) are chloroplast intermembrane. Residues 118-140 (WYQFVTATFCHANWNHLSSNLFF) form a helical membrane-spanning segment. Topologically, residues 141–154 (LYIFGKLVEEEEGN) are stromal. A helical membrane pass occupies residues 155 to 175 (FGLWLSYLFTGVGANLVSWLV). Residues 176 to 178 (LPR) are Chloroplast intermembrane-facing. Residues 179–199 (NAVSVGASGAVFGLFAISVLV) form a helical membrane-spanning segment. Ser-186 (nucleophile) is an active-site residue. The Stromal portion of the chain corresponds to 200 to 243 (KMSWDWRKILEVLILGQFVIERVMEAAQASAGLSGTIYGGYSLQ). The helical transmembrane segment at 244 to 264 (TVNHIAHLSGALVGVVLVWLL) threads the bilayer. His-250 acts as the Charge relay system in catalysis. Topologically, residues 265–280 (SKFPSASMDQDVKKSS) are chloroplast intermembrane.

This sequence belongs to the peptidase S54 family. As to quaternary structure, homooligomer.

The protein resides in the plastid. The protein localises to the chloroplast inner membrane. Functionally, rhomboid-type serine protease that catalyzes intramembrane proteolysis. May be involved in TIC22 processing during its import. This Arabidopsis thaliana (Mouse-ear cress) protein is Rhomboid-like protein 11, chloroplastic.